The primary structure comprises 481 residues: MTVRVRIAPSPTGNLHIGTARTAVFNWLFARHHGGKFILRIEDTDLERSRPEYTDNILEGLRWLGLNWDEGPFFQSQRLDLYKEAVQKLLDQGLAYRCYTTSEELEALREAQKARGEAPRYDNRHRNLTPEQRAAYEAEGRSYVIRFKIEDGREIVWNDLVRGKMSWRGSDLGGDMVIARASEEGSGQPLYNFVVVVDDIDMQITHVIRGEDHIANTAKQILLYEAMGAKIPEFSHTPLILNMEGRKLSKRDGVTSISEFQKMGFTAEGLVNYMTLLGWSPPDSTQEIFTLETAAKEFGFERVNKAGAKFDWDKLDWLNSQYIHNTPVDKLTDLLIPFWEAAGYKFDGGRDRAWLEQLVTLISQSLTRLVDAVPQSQLFFSDTVEFSEEGSTQLKQEGSTAVLEAIVTALENQPQLSEAAAQDIIKQVVKEQKVKKGLVMRSLRAALTGDVHGPDLIQSWLLLNQIGLDKSRLSRAITEAN.

The 'HIGH' region motif lies at 9 to 19; that stretch reads PSPTGNLHIGT. The 'KMSKS' region motif lies at 247–251; sequence KLSKR. Lysine 250 contacts ATP.

It belongs to the class-I aminoacyl-tRNA synthetase family. Glutamate--tRNA ligase type 1 subfamily. In terms of assembly, monomer.

The protein resides in the cytoplasm. It carries out the reaction tRNA(Glu) + L-glutamate + ATP = L-glutamyl-tRNA(Glu) + AMP + diphosphate. Catalyzes the attachment of glutamate to tRNA(Glu) in a two-step reaction: glutamate is first activated by ATP to form Glu-AMP and then transferred to the acceptor end of tRNA(Glu). The sequence is that of Glutamate--tRNA ligase from Nostoc punctiforme (strain ATCC 29133 / PCC 73102).